The following is a 459-amino-acid chain: Cysteine--tRNA ligase (459 aa).

C29 lines the Zn(2+) pocket. Positions 31–41 match the 'HIGH' region motif; sequence PTVYDRAHIGN. Residues C209, H234, and E238 each coordinate Zn(2+). The 'KMSKS' region signature appears at 266–270; sequence KMSKS. K269 contributes to the ATP binding site.

This sequence belongs to the class-I aminoacyl-tRNA synthetase family. Monomer. Zn(2+) is required as a cofactor.

It is found in the cytoplasm. It carries out the reaction tRNA(Cys) + L-cysteine + ATP = L-cysteinyl-tRNA(Cys) + AMP + diphosphate. The sequence is that of Cysteine--tRNA ligase from Paramagnetospirillum magneticum (strain ATCC 700264 / AMB-1) (Magnetospirillum magneticum).